Reading from the N-terminus, the 234-residue chain is Glucosamine-6-phosphate deaminase (234 aa).

Asp62 serves as the catalytic Proton acceptor; for enolization step. Asn128 (for ring-opening step) is an active-site residue. Catalysis depends on His130, which acts as the Proton acceptor; for ring-opening step. Catalysis depends on Glu135, which acts as the For ring-opening step.

It belongs to the glucosamine/galactosamine-6-phosphate isomerase family. NagB subfamily.

The enzyme catalyses alpha-D-glucosamine 6-phosphate + H2O = beta-D-fructose 6-phosphate + NH4(+). It functions in the pathway amino-sugar metabolism; N-acetylneuraminate degradation; D-fructose 6-phosphate from N-acetylneuraminate: step 5/5. Catalyzes the reversible isomerization-deamination of glucosamine 6-phosphate (GlcN6P) to form fructose 6-phosphate (Fru6P) and ammonium ion. This is Glucosamine-6-phosphate deaminase from Streptococcus uberis (strain ATCC BAA-854 / 0140J).